Here is an 893-residue protein sequence, read N- to C-terminus: Dolichyl-phosphate-mannose--protein mannosyltransferase 1 (893 aa).

A run of 7 helical transmembrane segments spans residues 29-49 (FSFL…CVRA), 77-97 (LLMD…AALT), 124-144 (LFTC…VYFP), 147-167 (SKTA…LITM), 170-190 (YIMI…YWSV), 224-244 (AMFT…NLLG), and 258-278 (FSYI…VFAV). In terms of domain architecture, MIR 1 spans 310-364 (FADVAYGSLVTIRNAIPEHGYLHSSELLYPEGTEQQIISLVDEPNQNALWIIEHE). Asn-370 is a glycosylation site (N-linked (GlcNAc...) asparagine). 2 MIR domains span residues 374 to 433 (IELL…IQIL) and 443 to 499 (NGTV…IESN). An N-linked (GlcNAc...) asparagine glycan is attached at Asn-443. Phosphothreonine is present on Thr-451. A run of 3 helical transmembrane segments spans residues 573–593 (FVWY…IFCL), 610–630 (YNYN…PYIL), and 643–663 (ALYF…NAVF). Asn-665 carries an N-linked (GlcNAc...) asparagine glycan. The chain crosses the membrane as a helical span at residues 671–691 (ALSVIIMALMFLVYRLYSPFT). The N-linked (GlcNAc...) asparagine glycan is linked to Asn-720. Positions 785–893 (KAEQEAREAA…VAESAQARVE (109 aa)) are disordered. Positions 786 to 806 (AEQEAREAAEKAASEAAERSS) are enriched in basic and acidic residues. 2 stretches are compositionally biased toward low complexity: residues 807 to 823 (SEAA…AASV) and 854 to 864 (MEAAALNNAAE). The span at 868 to 878 (VVGSSPESVAS) shows a compositional bias: polar residues.

This sequence belongs to the glycosyltransferase 39 family.

It is found in the endoplasmic reticulum membrane. The protein localises to the nucleus membrane. The catalysed reaction is a di-trans,poly-cis-dolichyl beta-D-mannosyl phosphate + L-seryl-[protein] = 3-O-(alpha-D-mannosyl)-L-seryl-[protein] + a di-trans,poly-cis-dolichyl phosphate + H(+). It catalyses the reaction a di-trans,poly-cis-dolichyl beta-D-mannosyl phosphate + L-threonyl-[protein] = 3-O-(alpha-D-mannosyl)-L-threonyl-[protein] + a di-trans,poly-cis-dolichyl phosphate + H(+). The protein operates within protein modification; protein glycosylation. Its function is as follows. Transfers mannose from Dol-P-mannose to Ser or Thr residues on proteins. Required for normal cell growth and septum formation. Shown to actively O-mannosylate wsc1. The protein is Dolichyl-phosphate-mannose--protein mannosyltransferase 1 (ogm1) of Schizosaccharomyces pombe (strain 972 / ATCC 24843) (Fission yeast).